A 344-amino-acid polypeptide reads, in one-letter code: S-adenosylmethionine:tRNA ribosyltransferase-isomerase (344 aa).

It belongs to the QueA family. In terms of assembly, monomer.

The protein localises to the cytoplasm. The enzyme catalyses 7-aminomethyl-7-carbaguanosine(34) in tRNA + S-adenosyl-L-methionine = epoxyqueuosine(34) in tRNA + adenine + L-methionine + 2 H(+). It participates in tRNA modification; tRNA-queuosine biosynthesis. In terms of biological role, transfers and isomerizes the ribose moiety from AdoMet to the 7-aminomethyl group of 7-deazaguanine (preQ1-tRNA) to give epoxyqueuosine (oQ-tRNA). The polypeptide is S-adenosylmethionine:tRNA ribosyltransferase-isomerase (Lactiplantibacillus plantarum (strain ATCC BAA-793 / NCIMB 8826 / WCFS1) (Lactobacillus plantarum)).